The sequence spans 268 residues: Imidazole glycerol phosphate synthase subunit HisF (268 aa).

Residues aspartate 12 and aspartate 131 contribute to the active site.

Belongs to the HisA/HisF family. Heterodimer of HisH and HisF.

It is found in the cytoplasm. It carries out the reaction 5-[(5-phospho-1-deoxy-D-ribulos-1-ylimino)methylamino]-1-(5-phospho-beta-D-ribosyl)imidazole-4-carboxamide + L-glutamine = D-erythro-1-(imidazol-4-yl)glycerol 3-phosphate + 5-amino-1-(5-phospho-beta-D-ribosyl)imidazole-4-carboxamide + L-glutamate + H(+). It functions in the pathway amino-acid biosynthesis; L-histidine biosynthesis; L-histidine from 5-phospho-alpha-D-ribose 1-diphosphate: step 5/9. Its function is as follows. IGPS catalyzes the conversion of PRFAR and glutamine to IGP, AICAR and glutamate. The HisF subunit catalyzes the cyclization activity that produces IGP and AICAR from PRFAR using the ammonia provided by the HisH subunit. The protein is Imidazole glycerol phosphate synthase subunit HisF of Salinibacter ruber (strain DSM 13855 / M31).